Here is a 108-residue protein sequence, read N- to C-terminus: Protein FMC1 homolog (108 aa).

It belongs to the FMC1 family.

The chain is Protein FMC1 homolog from Caenorhabditis elegans.